The sequence spans 815 residues: Translation initiation factor IF-2 (815 aa).

Over residues 153 to 176 (VQEKEAEKKVEKLKTADKPKEGNK) the composition is skewed to basic and acidic residues. Positions 153 to 219 (VQEKEAEKKV…THLSQKIQAE (67 aa)) are disordered. A compositionally biased stretch (basic residues) spans 191-209 (KQLHVARHNPNRRLKKKDR). A tr-type G domain is found at 315 to 482 (ARPPIVTIMG…AISLTAEILE (168 aa)). Positions 324-331 (GHVDHGKT) are G1. Position 324 to 331 (324 to 331 (GHVDHGKT)) interacts with GTP. The tract at residues 349 to 353 (GITQH) is G2. Residues 370–373 (DTPG) form a G3 region. Residues 370 to 374 (DTPGH) and 424 to 427 (NKID) each bind GTP. The G4 stretch occupies residues 424-427 (NKID). The G5 stretch occupies residues 460-462 (SAH).

Belongs to the TRAFAC class translation factor GTPase superfamily. Classic translation factor GTPase family. IF-2 subfamily.

The protein localises to the cytoplasm. Functionally, one of the essential components for the initiation of protein synthesis. Protects formylmethionyl-tRNA from spontaneous hydrolysis and promotes its binding to the 30S ribosomal subunits. Also involved in the hydrolysis of GTP during the formation of the 70S ribosomal complex. This Vesicomyosocius okutanii subsp. Calyptogena okutanii (strain HA) protein is Translation initiation factor IF-2.